A 631-amino-acid polypeptide reads, in one-letter code: DNA mismatch repair protein MutL (631 aa).

A disordered region spans residues Gly-389–Ala-423.

Belongs to the DNA mismatch repair MutL/HexB family.

Functionally, this protein is involved in the repair of mismatches in DNA. It is required for dam-dependent methyl-directed DNA mismatch repair. May act as a 'molecular matchmaker', a protein that promotes the formation of a stable complex between two or more DNA-binding proteins in an ATP-dependent manner without itself being part of a final effector complex. The polypeptide is DNA mismatch repair protein MutL (Shewanella loihica (strain ATCC BAA-1088 / PV-4)).